The primary structure comprises 639 residues: Extracellular metalloproteinase mep (639 aa).

A signal peptide spans 1–16 (MHMLSFIGALALPVFV). Positions 17-245 (CAQSCEPASL…IHGVVDYISE (229 aa)) are excised as a propeptide. Residues Asn-287, Asn-320, Asn-336, and Asn-368 are each glycosylated (N-linked (GlcNAc...) asparagine). His-429 lines the Zn(2+) pocket. Glu-430 is a catalytic residue. Residue His-433 participates in Zn(2+) binding. N-linked (GlcNAc...) asparagine glycosylation occurs at Asn-509.

This sequence belongs to the peptidase M36 family. It depends on Zn(2+) as a cofactor.

Its subcellular location is the secreted. Its function is as follows. Secreted metalloproteinase that allows assimilation of proteinaceous substrates. This Aspergillus flavus (strain ATCC 200026 / FGSC A1120 / IAM 13836 / NRRL 3357 / JCM 12722 / SRRC 167) protein is Extracellular metalloproteinase mep (mep).